Here is a 71-residue protein sequence, read N- to C-terminus: Large ribosomal subunit protein uL29 (71 aa).

The protein belongs to the universal ribosomal protein uL29 family.

This is Large ribosomal subunit protein uL29 (rpl29) from Halobacterium salinarum (strain ATCC 700922 / JCM 11081 / NRC-1) (Halobacterium halobium).